Reading from the N-terminus, the 611-residue chain is Pleckstrin homology domain-containing family N member 1 (611 aa).

The segment at 1-45 is disordered; the sequence is MGNSHCVPQAPRRLRASFSRKPSLKGNREDSARMSAGLPGPEAAR. A lipid anchor (N-myristoyl glycine) is attached at Gly-2. Residues 61-100 form an interaction with C1QBP region; the sequence is TDILDLENQRENLEQPFLSVFKKGRRRVPVRNLGKVVHYA. 2 consecutive PH domains span residues 96–192 and 222–319; these read VVHY…TALL and AVCA…THRE. Residue Tyr-302 is modified to Phosphotyrosine. Disordered regions lie at residues 323 to 424, 438 to 468, and 483 to 611; these read PLPG…PVTP, ESSP…TSHR, and MQSA…VQWI. Over residues 341 to 350 the composition is skewed to low complexity; sequence GSLSSGGQTS. The segment covering 360 to 391 has biased composition (polar residues); that stretch reads STRTSHSLPESSVPSTVGCSSQHTPDQANSDR. Phosphotyrosine is present on Tyr-456. Over residues 498–509 the composition is skewed to low complexity; the sequence is VPVSVPASDPRS. Ser-559 carries the phosphoserine modification. Basic and acidic residues predominate over residues 570-585; it reads RSPRRSRDPGYDHLWD.

As to quaternary structure, found in a complex with cytochrome c mRNA and various ribosomal proteins. Interacts with C1QBP. Interacts with ELAVL1. Interacts with BID. Phosphorylation is essential for its mitochondrial localization and regulates its interaction with C1QBP. As to expression, ubiquitous. Epressed in several cancer cell lines of differing origin.

The protein resides in the cell membrane. It is found in the mitochondrion. It localises to the mitochondrion membrane. In terms of biological role, controls the stability of the leptin mRNA harboring an AU-rich element (ARE) in its 3' UTR, in cooperation with the RNA stabilizer ELAVL1. Decreases the stability of the leptin mRNA by antagonizing the function of ELAVL1 by inducing its atypical recruitment from the nucleus to the cytosol. Binds to cardiolipin (CL), phosphatidic acid (PA), phosphatidylinositol 4-phosphate (PtdIns(4)P) and phosphatidylserine (PS). Promotes apoptosis by enhancing BAX-BAK hetero-oligomerization via interaction with BID in colon cancer cells. This Homo sapiens (Human) protein is Pleckstrin homology domain-containing family N member 1 (PLEKHN1).